The sequence spans 481 residues: Acetyltransferase peniE (481 aa).

Catalysis depends on proton acceptor residues histidine 164 and aspartate 411.

Belongs to the plant acyltransferase family. In terms of assembly, monomer.

Acetyltransferase; part of the gene cluster that mediates the biosynthesis of penifulvin A, a potent insecticidal sesquiterpene that features a [5.5.5.6]dioxafenestrane ring. The first step of the pathway is performed by the sesquiterpene cyclase peniA that generates the angular triquinane scaffold silphinene via cyclization of the linear farnesyl pyrophosphate (FPP). The cytochrome P450 monooxygenase peniB and the flavin-dependent monooxygenase peniC then catalyze a series of oxidation reactions to transform silphinene into penifulvin A. The dioxygenases peniD and peniF, as well as the acetyltransferase peniE, do not seem to be involved in the biosynthesis of penifulvin A. The protein is Acetyltransferase peniE of Penicillium patulum (Penicillium griseofulvum).